The following is a 476-amino-acid chain: Protein transport protein Sec61 subunit alpha isoform 1 (476 aa).

The Cytoplasmic segment spans residues 2-28 (AIKFLEVIKPFCVILPEIQKPERKIQF). A helical transmembrane segment spans residues 29 to 46 (KEKVLWTAITLFIFLVCC). The Lumenal portion of the chain corresponds to 47–80 (QIPLFGIMSSDSADPFYWMRVILASNRGTLMELG). The helical transmembrane segment at 81–97 (ISPIVTSGLIMQLLAGA) threads the bilayer. At 98–109 (KIIEVGDTPKDR) the chain is on the cytoplasmic side. Residues 110–131 (ALFNGAQKLFGMIITIGQSIVY) traverse the membrane as a helical segment. Residues 132 to 148 (VMTGMYGDPSEMGAGIC) lie on the Lumenal side of the membrane. A helical transmembrane segment spans residues 149–167 (LLITIQLFVAGLIVLLLDE). At 168–177 (LLQKGYGLGS) the chain is on the cytoplasmic side. A helical membrane pass occupies residues 178–196 (GISLFIATNICETIVWKAF). The Lumenal portion of the chain corresponds to 197-241 (SPTTVNTGRGMEFEGAIIALFHLLATRTDKVRALREAFYRQNLPN). A helical transmembrane segment spans residues 242 to 259 (LMNLIATIFVFAVVIYFQ). Residues 260-285 (GFRVDLPIKSARYRGQYNTYPIKLFY) are Cytoplasmic-facing. A helical membrane pass occupies residues 286–306 (TSNIPIILQSALVSNLYVISQ). Topologically, residues 307–356 (MLSARFSGNLLVSLLGTWSDTSSGGPARAYPVGGLCHYLSPPESFGSVLE) are lumenal. A helical transmembrane segment spans residues 357-379 (DPVHAVVYIVFMLGSCAFFSKTW). The Cytoplasmic segment spans residues 380 to 420 (IEVSGSSAKDVAKQLKEQQMVMRGHRETSMVHELNRYIPTA). A helical transmembrane segment spans residues 421-437 (AAFGGLCIGALSVLADF). Residues 438-443 (LGAIGS) are Lumenal-facing. A helical transmembrane segment spans residues 444-458 (GTGILLAVTIIYQYF). The Cytoplasmic portion of the chain corresponds to 459 to 476 (EIFVKEQSEVGSMGALLF).

The protein belongs to the SecY/SEC61-alpha family. In terms of assembly, the SEC61 channel-forming translocon complex consists of channel-forming core components SEC61A1, SEC61B and SEC61G and different auxiliary components such as SEC62 and SEC63. The SEC61 channel associates with the multi-pass translocon (MPT) complex.

The protein localises to the endoplasmic reticulum membrane. Functionally, component of SEC61 channel-forming translocon complex that mediates transport of signal peptide-containing precursor polypeptides across the endoplasmic reticulum (ER). Forms a ribosome receptor and a gated pore in the ER membrane, both functions required for cotranslational translocation of nascent polypeptides. May cooperate with auxiliary protein SEC62, SEC63 and HSPA5/BiP to enable post-translational transport of small presecretory proteins. The SEC61 channel is also involved in ER membrane insertion of transmembrane proteins: it mediates membrane insertion of the first few transmembrane segments of proteins, while insertion of subsequent transmembrane regions of multi-pass membrane proteins is mediated by the multi-pass translocon (MPT) complex. The SEC61 channel cooperates with the translocating protein TRAM1 to import nascent proteins into the ER. Controls the passive efflux of calcium ions from the ER lumen to the cytosol through SEC61 channel, contributing to the maintenance of cellular calcium homeostasis. Plays a critical role in nephrogenesis, specifically at pronephros stage. The sequence is that of Protein transport protein Sec61 subunit alpha isoform 1 (SEC61A1) from Canis lupus familiaris (Dog).